The following is a 126-amino-acid chain: Probable cystatin-16 (126 aa).

An N-terminal signal peptide occupies residues 1-20 (MFLKATLLLGLAVLGMHVWA). Cys84 and Cys94 are oxidised to a cystine. Asn106 is a glycosylation site (N-linked (GlcNAc...) asparagine).

It belongs to the cystatin family.

The protein resides in the secreted. This chain is Probable cystatin-16, found in Bos taurus (Bovine).